Reading from the N-terminus, the 205-residue chain is Small ribosomal subunit protein uS5 (205 aa).

The region spanning 49-112 (LEDEVLDIAM…TKAKMNLVKV (64 aa)) is the S5 DRBM domain.

It belongs to the universal ribosomal protein uS5 family. In terms of assembly, part of the 30S ribosomal subunit. Contacts protein S4.

With S4 and S12 plays an important role in translational accuracy. This is Small ribosomal subunit protein uS5 from Methanoregula boonei (strain DSM 21154 / JCM 14090 / 6A8).